We begin with the raw amino-acid sequence, 693 residues long: DNA ligase (693 aa).

Residues 40–44 (DSEYD), 89–90 (SL), and Glu121 each bind NAD(+). Lys123 functions as the N6-AMP-lysine intermediate in the catalytic mechanism. NAD(+)-binding residues include Arg144, Glu179, Lys295, and Lys319. Zn(2+) is bound by residues Cys413, Cys416, Cys431, and Cys437. The 84-residue stretch at 610–693 (REQNILTGKI…AFIKCLEKEV (84 aa)) folds into the BRCT domain.

This sequence belongs to the NAD-dependent DNA ligase family. LigA subfamily. The cofactor is Mg(2+). Mn(2+) is required as a cofactor.

The catalysed reaction is NAD(+) + (deoxyribonucleotide)n-3'-hydroxyl + 5'-phospho-(deoxyribonucleotide)m = (deoxyribonucleotide)n+m + AMP + beta-nicotinamide D-nucleotide.. In terms of biological role, DNA ligase that catalyzes the formation of phosphodiester linkages between 5'-phosphoryl and 3'-hydroxyl groups in double-stranded DNA using NAD as a coenzyme and as the energy source for the reaction. It is essential for DNA replication and repair of damaged DNA. This Rickettsia typhi (strain ATCC VR-144 / Wilmington) protein is DNA ligase.